The primary structure comprises 303 residues: MTQQRTLKNTIRATGVGLHSGDKVYMTLRPAPVDHGIVFRRVDLEPVVEVPADAELVTETTLCTGLTCNGAKIQTVEHLMSALAGLGVDNVIVELSSAELPIMDGSSGPFVFLLQSAGIVEQNKAKRFIRIKQPVEVREGDKVARFEPYEGYKLGFTIEFNHPMIPAKQSRQEIEFSTSAYVKEISRARTFGFMRDLEYMRERNLGLGGSMDNAIVLDEFRVLNEDGLRYTNEFVRHKILDAIGDLYLAGGAILGAYEGFKSGHALNNKLVRALLADQAAWEWVSFPEGTEQSPVTYASPVYA.

Zn(2+) contacts are provided by His-78, His-237, and Asp-241. His-264 functions as the Proton donor in the catalytic mechanism.

It belongs to the LpxC family. It depends on Zn(2+) as a cofactor.

It carries out the reaction a UDP-3-O-[(3R)-3-hydroxyacyl]-N-acetyl-alpha-D-glucosamine + H2O = a UDP-3-O-[(3R)-3-hydroxyacyl]-alpha-D-glucosamine + acetate. It participates in glycolipid biosynthesis; lipid IV(A) biosynthesis; lipid IV(A) from (3R)-3-hydroxytetradecanoyl-[acyl-carrier-protein] and UDP-N-acetyl-alpha-D-glucosamine: step 2/6. Its function is as follows. Catalyzes the hydrolysis of UDP-3-O-myristoyl-N-acetylglucosamine to form UDP-3-O-myristoylglucosamine and acetate, the committed step in lipid A biosynthesis. This is UDP-3-O-acyl-N-acetylglucosamine deacetylase from Xanthomonas campestris pv. campestris (strain B100).